Consider the following 203-residue polypeptide: Holliday junction branch migration complex subunit RuvA (203 aa).

Residues 1–64 form a domain I region; that stretch reads MIGRLRGIII…EDAQLLYGFN (64 aa). The interval 65–142 is domain II; sequence NKQERTLFKE…KGLHGDLFTP (78 aa). Residues 143 to 154 are flexible linker; that stretch reads AADLVLTSPASP. Positions 155–203 are domain III; the sequence is ATDDAEQEAVAALVALGYKPQEASRMVSKIARPDASSETLIREALRAAL.

It belongs to the RuvA family. Homotetramer. Forms an RuvA(8)-RuvB(12)-Holliday junction (HJ) complex. HJ DNA is sandwiched between 2 RuvA tetramers; dsDNA enters through RuvA and exits via RuvB. An RuvB hexamer assembles on each DNA strand where it exits the tetramer. Each RuvB hexamer is contacted by two RuvA subunits (via domain III) on 2 adjacent RuvB subunits; this complex drives branch migration. In the full resolvosome a probable DNA-RuvA(4)-RuvB(12)-RuvC(2) complex forms which resolves the HJ.

Its subcellular location is the cytoplasm. In terms of biological role, the RuvA-RuvB-RuvC complex processes Holliday junction (HJ) DNA during genetic recombination and DNA repair, while the RuvA-RuvB complex plays an important role in the rescue of blocked DNA replication forks via replication fork reversal (RFR). RuvA specifically binds to HJ cruciform DNA, conferring on it an open structure. The RuvB hexamer acts as an ATP-dependent pump, pulling dsDNA into and through the RuvAB complex. HJ branch migration allows RuvC to scan DNA until it finds its consensus sequence, where it cleaves and resolves the cruciform DNA. The sequence is that of Holliday junction branch migration complex subunit RuvA from Shigella boydii serotype 18 (strain CDC 3083-94 / BS512).